The chain runs to 281 residues: NAD kinase (281 aa).

Aspartate 61 serves as the catalytic Proton acceptor. Residues 61–62, 134–135, arginine 145, aspartate 164, 175–180, and glutamine 234 contribute to the NAD(+) site; these read DG, ND, and TAYSLS.

The protein belongs to the NAD kinase family. It depends on a divalent metal cation as a cofactor.

Its subcellular location is the cytoplasm. The catalysed reaction is NAD(+) + ATP = ADP + NADP(+) + H(+). Its function is as follows. Involved in the regulation of the intracellular balance of NAD and NADP, and is a key enzyme in the biosynthesis of NADP. Catalyzes specifically the phosphorylation on 2'-hydroxyl of the adenosine moiety of NAD to yield NADP. In Clostridium botulinum (strain Loch Maree / Type A3), this protein is NAD kinase.